The following is an 86-amino-acid chain: RNA-binding protein Hfq (86 aa).

A Sm domain is found at 9 to 68 (DPYLNVLRKERIPVSIYLVNGIKLQGQVESFDQFVVLLKNTVSQMVYKHAISTVVPSRPV).

This sequence belongs to the Hfq family. As to quaternary structure, homohexamer.

In terms of biological role, RNA chaperone that binds small regulatory RNA (sRNAs) and mRNAs to facilitate mRNA translational regulation in response to envelope stress, environmental stress and changes in metabolite concentrations. Also binds with high specificity to tRNAs. The protein is RNA-binding protein Hfq of Saccharophagus degradans (strain 2-40 / ATCC 43961 / DSM 17024).